The following is a 139-amino-acid chain: uncharacterized protein (139 aa).

A disordered region spans residues 1 to 26; the sequence is MQLVREKRGAHQHVPRKTTEPQKVRG. Residues 17 to 26 show a composition bias toward basic and acidic residues; the sequence is KTTEPQKVRG.

This is an uncharacterized protein from Ictalurid herpesvirus 1 (strain Auburn) (IcHV-1).